Here is a 184-residue protein sequence, read N- to C-terminus: Probable RNA 2'-phosphotransferase (184 aa).

This sequence belongs to the KptA/TPT1 family.

Functionally, removes the 2'-phosphate from RNA via an intermediate in which the phosphate is ADP-ribosylated by NAD followed by a presumed transesterification to release the RNA and generate ADP-ribose 1''-2''-cyclic phosphate (APPR&gt;P). May function as an ADP-ribosylase. This Escherichia coli (strain K12 / MC4100 / BW2952) protein is Probable RNA 2'-phosphotransferase.